Consider the following 418-residue polypeptide: UDP-N-acetylglucosamine 1-carboxyvinyltransferase 2 (418 aa).

22–23 (KN) is a phosphoenolpyruvate binding site. Arginine 93 contacts UDP-N-acetyl-alpha-D-glucosamine. Cysteine 117 functions as the Proton donor in the catalytic mechanism. The residue at position 117 (cysteine 117) is a 2-(S-cysteinyl)pyruvic acid O-phosphothioketal. UDP-N-acetyl-alpha-D-glucosamine is bound by residues 122–126 (RPIDQ), aspartate 305, and isoleucine 327.

The protein belongs to the EPSP synthase family. MurA subfamily.

It is found in the cytoplasm. It catalyses the reaction phosphoenolpyruvate + UDP-N-acetyl-alpha-D-glucosamine = UDP-N-acetyl-3-O-(1-carboxyvinyl)-alpha-D-glucosamine + phosphate. It functions in the pathway cell wall biogenesis; peptidoglycan biosynthesis. Cell wall formation. Adds enolpyruvyl to UDP-N-acetylglucosamine. This is UDP-N-acetylglucosamine 1-carboxyvinyltransferase 2 from Clostridium acetobutylicum (strain ATCC 824 / DSM 792 / JCM 1419 / IAM 19013 / LMG 5710 / NBRC 13948 / NRRL B-527 / VKM B-1787 / 2291 / W).